The chain runs to 404 residues: ATP phosphoribosyltransferase regulatory subunit (404 aa).

This sequence belongs to the class-II aminoacyl-tRNA synthetase family. HisZ subfamily. Heteromultimer composed of HisG and HisZ subunits.

It localises to the cytoplasm. It participates in amino-acid biosynthesis; L-histidine biosynthesis; L-histidine from 5-phospho-alpha-D-ribose 1-diphosphate: step 1/9. Functionally, required for the first step of histidine biosynthesis. May allow the feedback regulation of ATP phosphoribosyltransferase activity by histidine. The sequence is that of ATP phosphoribosyltransferase regulatory subunit from Picosynechococcus sp. (strain ATCC 27264 / PCC 7002 / PR-6) (Agmenellum quadruplicatum).